A 366-amino-acid polypeptide reads, in one-letter code: tRNA/tmRNA (uracil-C(5))-methyltransferase (366 aa).

Residues Gln-189, Tyr-217, Asn-222, Glu-238, and Asp-298 each contribute to the S-adenosyl-L-methionine site. Catalysis depends on Cys-323, which acts as the Nucleophile. Glu-357 acts as the Proton acceptor in catalysis.

Belongs to the class I-like SAM-binding methyltransferase superfamily. RNA M5U methyltransferase family. TrmA subfamily.

It carries out the reaction uridine(54) in tRNA + S-adenosyl-L-methionine = 5-methyluridine(54) in tRNA + S-adenosyl-L-homocysteine + H(+). The catalysed reaction is uridine(341) in tmRNA + S-adenosyl-L-methionine = 5-methyluridine(341) in tmRNA + S-adenosyl-L-homocysteine + H(+). Its function is as follows. Dual-specificity methyltransferase that catalyzes the formation of 5-methyluridine at position 54 (m5U54) in all tRNAs, and that of position 341 (m5U341) in tmRNA (transfer-mRNA). The polypeptide is tRNA/tmRNA (uracil-C(5))-methyltransferase (Photorhabdus laumondii subsp. laumondii (strain DSM 15139 / CIP 105565 / TT01) (Photorhabdus luminescens subsp. laumondii)).